Reading from the N-terminus, the 1419-residue chain is Myosin-2B (1419 aa).

One can recognise a Myosin N-terminal SH3-like domain in the interval 4–57 (EVGTRCWYPNSEAGWIGCEVTKNDFQDGTYHIELTSETGLVIPIETKHLESNNA). The 706-residue stretch at 75–780 (EATHDLTTLS…VLAYLEKIRS (706 aa)) folds into the Myosin motor domain. 169-176 (GESGAGKT) lines the ATP pocket. Residues 451–531 (FIGVLDIYGF…LGILSLLDEE (81 aa)) are actin-binding. 6 consecutive IQ domains span residues 783–805 (VTEL…LYLQ), 806–830 (AMLS…DFEM), 831–854 (KTDA…VFET), 855–878 (LKNI…QREF), 879–901 (ESRS…RYQT), and 902–931 (LKTG…QAES). Positions 909 to 940 (IQALVRRKQSQEKLKQLKIQAESAASLKNSAA) form a coiled coil. The tract at residues 1061-1419 (KDNERTSTSS…VIKELGSLLA (359 aa)) is non alpha-helical, tail domain. The Dilute domain maps to 1143–1357 (HSILKQTVQD…LNHLSNTARR (215 aa)).

The protein belongs to the TRAFAC class myosin-kinesin ATPase superfamily. Myosin family. In terms of assembly, homodimer. Interacts with calmodulin (CMD1) and the myosin light chain MLC1 through its IQ repeats.

Its function is as follows. Myosin heavy chain that is required for the cell cycle-regulated transport of various organelles and proteins for their segregation. Functions by binding with its tail domain to receptor proteins on organelles and exerting force with its N-terminal motor domain against actin filaments, thereby transporting its cargo along polarized actin cables. In Naumovozyma castellii (Yeast), this protein is Myosin-2B (MYO2B).